The sequence spans 256 residues: MKIITCYKCVPDEQDIAINNADGTLDFSKADSKISQYDLNAIEAACQLKQQLGDAQVVAMSVGGKALTNAKGRKDVLSRGPDELIVVIDDQFEQALPQHTATALAAAAQKSGFDLLICGDGSSDLYAQQVGLLVGEALNIPAINGVSKILSLTDSTLTVERELEDEVETLSIPLPAVIAVSTDINTPQIPSMKAILGAAKKPVQVWSPADIGLNSVPAYSAQQVAAPKQRERQRVVIEGDGEEQIAAFVENLRKII.

It belongs to the ETF beta-subunit/FixA family. Heterodimer of FixA and FixB.

It functions in the pathway amine and polyamine metabolism; carnitine metabolism. In terms of biological role, required for anaerobic carnitine reduction. May bring reductant to CaiA. The polypeptide is Protein FixA (Salmonella paratyphi B (strain ATCC BAA-1250 / SPB7)).